The sequence spans 87 residues: Small ribosomal subunit protein uS17 (87 aa).

The protein belongs to the universal ribosomal protein uS17 family. In terms of assembly, part of the 30S ribosomal subunit.

One of the primary rRNA binding proteins, it binds specifically to the 5'-end of 16S ribosomal RNA. The polypeptide is Small ribosomal subunit protein uS17 (Staphylococcus haemolyticus (strain JCSC1435)).